The sequence spans 179 residues: Large ribosomal subunit protein uL6 (179 aa).

This sequence belongs to the universal ribosomal protein uL6 family. As to quaternary structure, part of the 50S ribosomal subunit.

Its function is as follows. This protein binds to the 23S rRNA, and is important in its secondary structure. It is located near the subunit interface in the base of the L7/L12 stalk, and near the tRNA binding site of the peptidyltransferase center. This is Large ribosomal subunit protein uL6 from Nocardioides sp. (strain ATCC BAA-499 / JS614).